The following is a 77-amino-acid chain: Small ribosomal subunit protein bS21 (77 aa).

The span at Lys38 to Arg52 shows a compositional bias: basic and acidic residues. The tract at residues Lys38–Lys77 is disordered. A compositionally biased stretch (basic residues) spans Arg53–Ala62.

It belongs to the bacterial ribosomal protein bS21 family.

This is Small ribosomal subunit protein bS21 from Bartonella henselae (strain ATCC 49882 / DSM 28221 / CCUG 30454 / Houston 1) (Rochalimaea henselae).